We begin with the raw amino-acid sequence, 550 residues long: Retron Ec78 probable ATPase (550 aa).

Residues Gly93–Thr100 carry the ATP-binding motif.

Functionally, probable ATPase component of antiviral defense system retron Ec78, composed of a non-coding RNA (ncRNA), a reverse transcriptase (RT), this protein and a putative HNH endonuclease. Expression of retron Ec78 confers protection against bacteriophage T5. At multiplicity of infection (MOI) of 0.02 cultures slow growth when infected with T5 but do not collapse, at MOI 2 cultures enter growth stasis. This Escherichia coli protein is Retron Ec78 probable ATPase.